Here is a 1034-residue protein sequence, read N- to C-terminus: Ice nucleation protein InaU (1034 aa).

The octapeptide periodicity stretch occupies residues 162–993; it reads ATYGSTLSGT…LTAGENSVLI (832 aa). Disordered stretches follow at residues 260 to 287, 311 to 342, 356 to 383, 407 to 438, 452 to 480, and 570 to 597; these read YGST…KGSD, TQTA…GYGS, YGST…GSDL, and AREG…TGYG. 6 stretches are compositionally biased toward polar residues: residues 261-286, 311-334, 357-382, 407-430, 453-480, and 580-592; these read GSTQ…QKGS, TQTA…QKGS, GSTQ…GSDL, and YGST…NSDL.

This sequence belongs to the bacterial ice nucleation protein family.

Its subcellular location is the cell outer membrane. Its function is as follows. Ice nucleation proteins enable bacteria to nucleate crystallization in supercooled water. This is Ice nucleation protein InaU (inaU) from Pantoea ananas (Erwinia uredovora).